The chain runs to 306 residues: UDP-3-O-acyl-N-acetylglucosamine deacetylase (306 aa).

Histidine 79, histidine 238, and aspartate 242 together coordinate Zn(2+). Histidine 265 (proton donor) is an active-site residue.

Belongs to the LpxC family. The cofactor is Zn(2+).

The catalysed reaction is a UDP-3-O-[(3R)-3-hydroxyacyl]-N-acetyl-alpha-D-glucosamine + H2O = a UDP-3-O-[(3R)-3-hydroxyacyl]-alpha-D-glucosamine + acetate. The protein operates within glycolipid biosynthesis; lipid IV(A) biosynthesis; lipid IV(A) from (3R)-3-hydroxytetradecanoyl-[acyl-carrier-protein] and UDP-N-acetyl-alpha-D-glucosamine: step 2/6. In terms of biological role, catalyzes the hydrolysis of UDP-3-O-myristoyl-N-acetylglucosamine to form UDP-3-O-myristoylglucosamine and acetate, the committed step in lipid A biosynthesis. This chain is UDP-3-O-acyl-N-acetylglucosamine deacetylase, found in Shewanella sp. (strain ANA-3).